A 93-amino-acid chain; its full sequence is Defensin 5 (93 aa).

A signal peptide spans methionine 1 to alanine 19. Residues glutamate 20 to valine 58 constitute a propeptide that is removed on maturation. Cystine bridges form between cysteine 64–cysteine 92, cysteine 66–cysteine 81, and cysteine 71–cysteine 91.

Belongs to the alpha-defensin family. As to expression, small intestine. Not present in heart, liver, spleen, kidney, large intestine and colon.

The protein localises to the secreted. In terms of biological role, probably contributes to the antimicrobial barrier function of the small intestine. This chain is Defensin 5, found in Rattus norvegicus (Rat).